A 247-amino-acid polypeptide reads, in one-letter code: Fibroblast growth factor 14 (247 aa).

Disordered stretches follow at residues 1 to 37 (MAAAIASGLIRQKRQAREQHWDRPSASRRRSSPSKNR) and 216 to 247 (ETVPKAGVTPSKSTSASAIMNGGKPVNKCKTT). The span at 15 to 25 (QAREQHWDRPS) shows a compositional bias: basic and acidic residues.

The protein belongs to the heparin-binding growth factors family. Interacts with SCN8A. As to expression, brain and testis; widely distributed in the developing nervous system. In adult, high levels in the granular layer of the cerebellum, less in hippocampus and olfactory bulb.

The protein resides in the nucleus. In terms of biological role, probably involved in nervous system development and function. This chain is Fibroblast growth factor 14 (Fgf14), found in Mus musculus (Mouse).